A 990-amino-acid chain; its full sequence is Sister chromatid cohesion protein PDS5 homolog E (990 aa).

HEAT repeat units follow at residues 31 to 57 (DATL…SVQK), 58 to 96 (ALHP…ITAP), 153 to 190 (DLVL…DESE), 191 to 228 (EVPM…SCTC), and 232 to 269 (PCIM…HNDV). The interval 262-565 (TTQAHNDVKP…AGEEVESNTN (304 aa)) is disordered. Residues 267–281 (NDVKPKDNEADEKIS) show a composition bias toward basic and acidic residues. Basic residues predominate over residues 302–314 (KGTRSKRSARGGT). Composition is skewed to polar residues over residues 328-342 (EGLS…ASGS) and 394-410 (VGQT…SSGR). Composition is skewed to basic and acidic residues over residues 421–430 (TKMEETDHDV), 448–477 (PAKE…EKAD), and 503–512 (VHSDAKKKNS). The Nuclear localization signal 1 signature appears at 458 to 465 (VKKHEDGI). Short sequence motifs (nuclear localization signal) lie at residues 539-546 (TKKSEQAP) and 583-590 (DKKFYEGV). The segment at 653–966 (KKRKIVSKNV…VGNEAEEDDQ (314 aa)) is disordered. Positions 662 to 673 (VEPSSSPEVRSS) are enriched in low complexity. Short sequence motifs (nuclear localization signal) lie at residues 677 to 684 (MKKKDSVT) and 715 to 722 (LKKLNGEP). Residues 727 to 742 (GRTGKKQKVTQAMHRK) are compositionally biased toward basic residues. Positions 746-760 (DCDEQEDLETKDEED) are enriched in acidic residues. 3 stretches are compositionally biased toward basic and acidic residues: residues 761–810 (SLKL…KTNG), 819–890 (TDGK…KETN), and 898–947 (EEQK…DKET).

The protein belongs to the PDS5 family. Interacts with the cohesin complex.

It localises to the nucleus. In terms of biological role, cohesin cofactor dispensable during the meiotic division but playing an important role in DNA repair by homologous recombination (HR) probably by helping SMC5/SMC6 complex. Regulator of sister chromatid cohesion in mitosis which may stabilize cohesin complex association with chromatin. May couple sister chromatid cohesion during mitosis to DNA replication. Cohesion ensures that chromosome partitioning is accurate in both meiotic and mitotic cells and plays an important role in DNA repair. This chain is Sister chromatid cohesion protein PDS5 homolog E, found in Arabidopsis thaliana (Mouse-ear cress).